The sequence spans 1773 residues: ATP-binding cassette sub-family A member 17 (1773 aa).

A run of 3 helical transmembrane segments spans residues 22–42 (TLVT…VLYL), 262–282 (FPLL…NSIL), and 306–326 (AWFI…TVLF). Asn340 carries N-linked (GlcNAc...) asparagine glycosylation. A run of 4 helical transmembrane segments spans residues 342 to 362 (TLIF…AFMM), 372 to 392 (GTVI…YITF), 403 to 423 (ILSC…ISLF), and 444 to 464 (FTQV…VAFL). The ABC transporter 1 domain occupies 525–758 (IEIQHLYKVF…YGAGYYMTII (234 aa)). 561-568 (GHNGAGKT) contacts ATP. An N-linked (GlcNAc...) asparagine glycan is attached at Asn615. 7 consecutive transmembrane segments (helical) span residues 912-932 (LVLS…LSFF), 1088-1108 (LVVN…ILTV), 1134-1154 (LLWD…VFFW), 1166-1186 (IPAV…LVYT), 1198-1218 (CVKL…LVTV), 1236-1256 (IFLI…YYNF), and 1293-1313 (IGKY…LLFL). N-linked (GlcNAc...) asparagine glycosylation is present at Asn1340. The ABC transporter 2 domain maps to 1369–1602 (LVVKELSKVY…FGSGYSLQAK (234 aa)). Residue 1404–1411 (GLNGAGKT) participates in ATP binding. The tract at residues 1690-1773 (NIQQGQAALD…SQPPSEPVLL (84 aa)) is disordered. The span at 1700–1710 (SSLSPSNSRPI) shows a compositional bias: low complexity. Composition is skewed to pro residues over residues 1711 to 1740 (SSPP…PSRP) and 1763 to 1773 (PSQPPSEPVLL).

It belongs to the ABC transporter superfamily. ABCA family. N-glycosylated.

The protein localises to the endoplasmic reticulum membrane. Its subcellular location is the cytoplasm. It catalyses the reaction cholesterol(in) + ATP + H2O = cholesterol(out) + ADP + phosphate + H(+). Promotes cholesterol efflux from sperm which renders sperm capable of fertilization. Has also been shown to decrease levels of intracellular esterified neutral lipids including cholesteryl esters, fatty acid esters and triacylglycerols. The sequence is that of ATP-binding cassette sub-family A member 17 from Rattus norvegicus (Rat).